Here is an 841-residue protein sequence, read N- to C-terminus: Protein translocase subunit SecA (841 aa).

ATP-binding positions include Gln86, 104–108, and Asp493; that span reads GEGKT. Residues 788–822 form a disordered region; that stretch reads EEVAEGKAVRPSANGQEDKKAKRKPVRKAENIGRN. Zn(2+) is bound by residues Cys825, Cys827, Cys836, and Cys837.

The protein belongs to the SecA family. As to quaternary structure, monomer and homodimer. Part of the essential Sec protein translocation apparatus which comprises SecA, SecYEG and auxiliary proteins SecDF. Other proteins may also be involved. Zn(2+) is required as a cofactor.

It localises to the cell membrane. The protein localises to the cytoplasm. The enzyme catalyses ATP + H2O + cellular proteinSide 1 = ADP + phosphate + cellular proteinSide 2.. Its function is as follows. Part of the Sec protein translocase complex. Interacts with the SecYEG preprotein conducting channel. Has a central role in coupling the hydrolysis of ATP to the transfer of proteins into and across the cell membrane, serving as an ATP-driven molecular motor driving the stepwise translocation of polypeptide chains across the membrane. This Shouchella clausii (strain KSM-K16) (Alkalihalobacillus clausii) protein is Protein translocase subunit SecA.